A 593-amino-acid polypeptide reads, in one-letter code: High affinity cGMP-specific 3',5'-cyclic phosphodiesterase 9A (593 aa).

The disordered stretch occupies residues 87 to 141; it reads SAGVEDKRTTSRGQSAERPLRDRRVVGLEQPRREGAFESGQVEPRPREPQGCYQE. A compositionally biased stretch (basic and acidic residues) spans 104–122; the sequence is RPLRDRRVVGLEQPRREGA. The region spanning 236 to 557 is the PDEase domain; the sequence is PRRDVPTYPK…DRYEELKRID (322 aa). Catalysis depends on His312, which acts as the Proton donor. 312-316 lines the 3',5'-cyclic GMP pocket; the sequence is HNFRH. His316, His352, and Asp353 together coordinate Zn(2+). Asp353 serves as a coordination point for 3',5'-cyclic GMP. Asp353 is a binding site for Mg(2+). A Phosphoserine modification is found at Ser379. 3',5'-cyclic GMP is bound by residues Asp462, Tyr484, and 512–513; that span reads AQ. Residue Asp462 coordinates Zn(2+). The disordered stretch occupies residues 564–593; that stretch reads QKKTDSLTSGATEKSRERSRDVKNSEGDCA. Over residues 576-593 the composition is skewed to basic and acidic residues; sequence EKSRERSRDVKNSEGDCA.

The protein belongs to the cyclic nucleotide phosphodiesterase family. PDE9 subfamily. Homodimer. Zn(2+) is required as a cofactor. Mg(2+) serves as cofactor. Expressed in all tissues examined (testis, brain, small intestine, skeletal muscle, heart, lung, thymus, spleen, placenta, kidney, liver, pancreas, ovary and prostate) except blood. Highest levels in brain, heart, kidney, spleen, prostate and colon. Isoform PDE9A12 is found in prostate. In brain, present in the cortex, cerebellum, and subiculum (at protein level). In heart, primarily localizes to myocytes.

It localises to the cell projection. The protein localises to the ruffle membrane. Its subcellular location is the cytoplasm. It is found in the perinuclear region. The protein resides in the golgi apparatus. It localises to the endoplasmic reticulum. The protein localises to the cell membrane. Its subcellular location is the sarcolemma. The enzyme catalyses 3',5'-cyclic GMP + H2O = GMP + H(+). Its pathway is purine metabolism; 3',5'-cyclic GMP degradation; GMP from 3',5'-cyclic GMP: step 1/1. With respect to regulation, inhibited by zaprinast; inhibitor is however not specific to PDE9A. Specifically inhibited by BAY-73-6691 (1-(2-chlorophenyl)-6-((2R)-3,3,3- trifluoro-2-methylpropyl)-1,5-dihydro-4H-pyrazolo(3,4-d)pyrimidine-4-one). BAY-73-9961 has two enantiomers, (R) and (S), due to the presence of a chiral center, and both forms vary in their pattern of interaction. Specifically inhibited by PF-4181366 (4H-Pyrazolo[3,4-d]pyrimidin-4-one, 1- cyclopentyl-1,5-dihydro-6-[(3S,4S)-4-methyl- 1-(6-quinoxalinylmethyl)-3-pyrrolidinyl]-one). Specifically inhibited by PF-4449613 ((R)-6-(1-(3-phenoxyazetidin-1-yl)ethyl)-1-(tetrahydro-2H-pyran-4-yl)-1H-pyrazolo[3,4-d]pyrimidin- 4(5H)-one). Specifically inhibited by inhibitor 28 (2-((1-(2-Chlorophenyl)-4-hydroxy-1Hpyrazolo[ 3,4-d]pyrimidin-6-yl)amino)-N-(4- methoxyphenyl)propanamide): inhibitor forms a hydrogen bond with Tyr-484 and Gln-513. Specifically inhibited by 1-Cyclopentyl-6-[(1r)-1-(3-phenoxyazetidin- 1-Yl)ethyl]-1,5-dihydro-4h-pyrazolo[3,4-D] pyrimidin-4-one: inhibitor forms a hydrogen bond with Tyr-484 and Gln-513. In terms of biological role, specifically hydrolyzes the second messenger cGMP, which is a key regulator of many important physiological processes. Highly specific: compared to other members of the cyclic nucleotide phosphodiesterase family, has the highest affinity and selectivity for cGMP. Specifically regulates natriuretic-peptide-dependent cGMP signaling in heart, acting as a regulator of cardiac hypertrophy in myocytes and muscle. Does not regulate nitric oxide-dependent cGMP in heart. Additional experiments are required to confirm whether its ability to hydrolyze natriuretic-peptide-dependent cGMP is specific to heart or is a general feature of the protein. In brain, involved in cognitive function, such as learning and long-term memory. The polypeptide is High affinity cGMP-specific 3',5'-cyclic phosphodiesterase 9A (Homo sapiens (Human)).